We begin with the raw amino-acid sequence, 586 residues long: Chaperone protein HscA homolog (586 aa).

This sequence belongs to the heat shock protein 70 family.

Its function is as follows. Chaperone involved in the maturation of iron-sulfur cluster-containing proteins. Has a low intrinsic ATPase activity which is markedly stimulated by HscB. In Rickettsia typhi (strain ATCC VR-144 / Wilmington), this protein is Chaperone protein HscA homolog.